The following is a 253-amino-acid chain: 3-deoxy-manno-octulosonate cytidylyltransferase (253 aa).

The protein belongs to the KdsB family.

It localises to the cytoplasm. The enzyme catalyses 3-deoxy-alpha-D-manno-oct-2-ulosonate + CTP = CMP-3-deoxy-beta-D-manno-octulosonate + diphosphate. Its pathway is nucleotide-sugar biosynthesis; CMP-3-deoxy-D-manno-octulosonate biosynthesis; CMP-3-deoxy-D-manno-octulosonate from 3-deoxy-D-manno-octulosonate and CTP: step 1/1. The protein operates within bacterial outer membrane biogenesis; lipopolysaccharide biosynthesis. In terms of biological role, activates KDO (a required 8-carbon sugar) for incorporation into bacterial lipopolysaccharide in Gram-negative bacteria. This is 3-deoxy-manno-octulosonate cytidylyltransferase from Geotalea daltonii (strain DSM 22248 / JCM 15807 / FRC-32) (Geobacter daltonii).